A 176-amino-acid chain; its full sequence is Inorganic pyrophosphatase (176 aa).

Substrate contacts are provided by lysine 30, arginine 44, and tyrosine 56. Mg(2+)-binding residues include aspartate 66, aspartate 71, and aspartate 103. Substrate is bound at residue tyrosine 142.

It belongs to the PPase family. As to quaternary structure, homohexamer. It depends on Mg(2+) as a cofactor.

The protein localises to the cytoplasm. The enzyme catalyses diphosphate + H2O = 2 phosphate + H(+). Catalyzes the hydrolysis of inorganic pyrophosphate (PPi) forming two phosphate ions. The polypeptide is Inorganic pyrophosphatase (Escherichia coli O6:H1 (strain CFT073 / ATCC 700928 / UPEC)).